The following is a 106-amino-acid chain: UPF0642 protein YBL028C (106 aa).

Positions 1–12 are enriched in polar residues; that stretch reads MAKSLRASSHLN. Disordered stretches follow at residues 1–21 and 52–106; these read MAKS…RRGV and KEEQ…FTRF. Positions 62 to 72 are enriched in basic and acidic residues; sequence DEKKSNEEAPR. The span at 83–106 shows a compositional bias: basic residues; it reads GRHHTYKKAKLMKQSKKKTSFTRF.

Belongs to the UPF0642 family.

This Saccharomyces cerevisiae (strain ATCC 204508 / S288c) (Baker's yeast) protein is UPF0642 protein YBL028C.